The chain runs to 55 residues: ATP synthase protein 8 (55 aa).

The helical transmembrane segment at Ile7–Leu28 threads the bilayer.

This sequence belongs to the ATPase protein 8 family. As to quaternary structure, F-type ATPases have 2 components, CF(1) - the catalytic core - and CF(0) - the membrane proton channel.

Its subcellular location is the mitochondrion membrane. Its function is as follows. Mitochondrial membrane ATP synthase (F(1)F(0) ATP synthase or Complex V) produces ATP from ADP in the presence of a proton gradient across the membrane which is generated by electron transport complexes of the respiratory chain. F-type ATPases consist of two structural domains, F(1) - containing the extramembraneous catalytic core and F(0) - containing the membrane proton channel, linked together by a central stalk and a peripheral stalk. During catalysis, ATP synthesis in the catalytic domain of F(1) is coupled via a rotary mechanism of the central stalk subunits to proton translocation. Part of the complex F(0) domain. Minor subunit located with subunit a in the membrane. In Pisaster ochraceus (Ochre sea star), this protein is ATP synthase protein 8 (MT-ATP8).